Here is a 221-residue protein sequence, read N- to C-terminus: ATP synthase subunit a 1 (221 aa).

Helical transmembrane passes span 20 to 40, 78 to 98, 108 to 128, 174 to 194, and 196 to 216; these read LTIVTTWALMLLLAGGSALIT, YLPFIAALFLFIATANLCTVI, LSTTAALALSVFIAVPLFGIA, MILVILLTISPLVFPVLMNIL, and LLTGMVQAYIFSILATVYIAA.

The protein belongs to the ATPase A chain family. F-type ATPases have 2 components, CF(1) - the catalytic core - and CF(0) - the membrane proton channel. CF(1) has five subunits: alpha(3), beta(3), gamma(1), delta(1), epsilon(1). CF(0) has four main subunits: a, b, b' and c.

It localises to the cell inner membrane. Its function is as follows. Key component of the proton channel; it plays a direct role in the translocation of protons across the membrane. In Chlorobaculum tepidum (strain ATCC 49652 / DSM 12025 / NBRC 103806 / TLS) (Chlorobium tepidum), this protein is ATP synthase subunit a 1.